Reading from the N-terminus, the 223-residue chain is UPF0758 protein HD_0732 (223 aa).

The region spanning 98–220 (TINTPHLAIM…YFSFEEERFH (123 aa)) is the MPN domain. Positions 169, 171, and 182 each coordinate Zn(2+). Residues 169-182 (HNHPSGNCTASQAD) carry the JAMM motif motif.

The protein belongs to the UPF0758 family.

This is UPF0758 protein HD_0732 from Haemophilus ducreyi (strain 35000HP / ATCC 700724).